A 164-amino-acid chain; its full sequence is R-phycoerythrin alpha chain (164 aa).

(2R,3E)-phycoerythrobilin contacts are provided by N47, K81, C82, R84, H88, R137, C139, and R142.

The protein belongs to the phycobiliprotein family. Heterododecamer of 6 alpha and 6 beta chains. The basic functional unit of phycobiliproteins is a ring-shaped hexamer formed from two back-to-back trimers contacting via the alpha chain subunits. The trimers are composed of alpha/beta subunit heterodimers arranged around a three-fold axis of symmetry. The phycoerythrins also contain a gamma subunit which is located in the center of the hexamer. Contains two covalently linked phycoerythrobilin chromophores. In PubMed:8876649 the authors refer to the bilins as phycoerythrobilins. In the PDB entries, the bilins are named as phycocyanobilins although the modeled compounds correspond to phycoerythrobilins.

The protein resides in the plastid. The protein localises to the chloroplast thylakoid membrane. Its function is as follows. Light-harvesting photosynthetic tetrapyrrole chromophore-protein from the phycobiliprotein complex. This is R-phycoerythrin alpha chain (cpeA) from Polysiphonia urceolata (Red alga).